Here is a 170-residue protein sequence, read N- to C-terminus: Adenine phosphoribosyltransferase (170 aa).

Belongs to the purine/pyrimidine phosphoribosyltransferase family. As to quaternary structure, homodimer.

It localises to the cytoplasm. It carries out the reaction AMP + diphosphate = 5-phospho-alpha-D-ribose 1-diphosphate + adenine. It functions in the pathway purine metabolism; AMP biosynthesis via salvage pathway; AMP from adenine: step 1/1. Its function is as follows. Catalyzes a salvage reaction resulting in the formation of AMP, that is energically less costly than de novo synthesis. In Acholeplasma laidlawii (strain PG-8A), this protein is Adenine phosphoribosyltransferase.